A 275-amino-acid chain; its full sequence is Formamidopyrimidine-DNA glycosylase (275 aa).

Proline 2 acts as the Schiff-base intermediate with DNA in catalysis. The active-site Proton donor is the glutamate 3. Catalysis depends on lysine 58, which acts as the Proton donor; for beta-elimination activity. Positions 91 and 110 each coordinate DNA. The FPG-type zinc-finger motif lies at 238–272 (QVYGQTGKSCPRCGQAIVKLKVGGRGTHICPKCQK). Arginine 262 (proton donor; for delta-elimination activity) is an active-site residue.

It belongs to the FPG family. Monomer. The cofactor is Zn(2+).

The catalysed reaction is Hydrolysis of DNA containing ring-opened 7-methylguanine residues, releasing 2,6-diamino-4-hydroxy-5-(N-methyl)formamidopyrimidine.. The enzyme catalyses 2'-deoxyribonucleotide-(2'-deoxyribose 5'-phosphate)-2'-deoxyribonucleotide-DNA = a 3'-end 2'-deoxyribonucleotide-(2,3-dehydro-2,3-deoxyribose 5'-phosphate)-DNA + a 5'-end 5'-phospho-2'-deoxyribonucleoside-DNA + H(+). Involved in base excision repair of DNA damaged by oxidation or by mutagenic agents. Acts as a DNA glycosylase that recognizes and removes damaged bases. Has a preference for oxidized purines, such as 7,8-dihydro-8-oxoguanine (8-oxoG). Has AP (apurinic/apyrimidinic) lyase activity and introduces nicks in the DNA strand. Cleaves the DNA backbone by beta-delta elimination to generate a single-strand break at the site of the removed base with both 3'- and 5'-phosphates. The sequence is that of Formamidopyrimidine-DNA glycosylase from Streptococcus pyogenes serotype M3 (strain ATCC BAA-595 / MGAS315).